Here is a 283-residue protein sequence, read N- to C-terminus: Pantothenate synthetase (283 aa).

31–38 (MGALHDGH) is a binding site for ATP. His38 functions as the Proton donor in the catalytic mechanism. Gln62 provides a ligand contact to (R)-pantoate. A beta-alanine-binding site is contributed by Gln62. Residue 148-151 (GKKD) participates in ATP binding. Gln154 is a binding site for (R)-pantoate. ATP is bound by residues Ile177 and 185 to 188 (KSSR).

Belongs to the pantothenate synthetase family. As to quaternary structure, homodimer.

Its subcellular location is the cytoplasm. The catalysed reaction is (R)-pantoate + beta-alanine + ATP = (R)-pantothenate + AMP + diphosphate + H(+). It participates in cofactor biosynthesis; (R)-pantothenate biosynthesis; (R)-pantothenate from (R)-pantoate and beta-alanine: step 1/1. In terms of biological role, catalyzes the condensation of pantoate with beta-alanine in an ATP-dependent reaction via a pantoyl-adenylate intermediate. This chain is Pantothenate synthetase, found in Oceanobacillus iheyensis (strain DSM 14371 / CIP 107618 / JCM 11309 / KCTC 3954 / HTE831).